We begin with the raw amino-acid sequence, 516 residues long: Exodeoxyribonuclease 7 large subunit (516 aa).

It belongs to the XseA family. Heterooligomer composed of large and small subunits.

Its subcellular location is the cytoplasm. The catalysed reaction is Exonucleolytic cleavage in either 5'- to 3'- or 3'- to 5'-direction to yield nucleoside 5'-phosphates.. Its function is as follows. Bidirectionally degrades single-stranded DNA into large acid-insoluble oligonucleotides, which are then degraded further into small acid-soluble oligonucleotides. This Chlamydia trachomatis serovar L2 (strain ATCC VR-902B / DSM 19102 / 434/Bu) protein is Exodeoxyribonuclease 7 large subunit.